Here is a 129-residue protein sequence, read N- to C-terminus: Lysozyme C (129 aa).

Positions 1 to 129 (KVYGRCELAA…VHAWIRGCRL (129 aa)) constitute a C-type lysozyme domain. 4 cysteine pairs are disulfide-bonded: Cys6/Cys127, Cys30/Cys115, Cys64/Cys80, and Cys76/Cys94. Active-site residues include Glu35 and Asp52.

It belongs to the glycosyl hydrolase 22 family. As to quaternary structure, monomer.

Its subcellular location is the secreted. The catalysed reaction is Hydrolysis of (1-&gt;4)-beta-linkages between N-acetylmuramic acid and N-acetyl-D-glucosamine residues in a peptidoglycan and between N-acetyl-D-glucosamine residues in chitodextrins.. In terms of biological role, lysozymes have primarily a bacteriolytic function; those in tissues and body fluids are associated with the monocyte-macrophage system and enhance the activity of immunoagents. In Tragopan temminckii (Temminck's tragopan), this protein is Lysozyme C (LYZ).